Consider the following 501-residue polypeptide: Glucose-6-phosphate exchanger SLC37A2 (501 aa).

A helical transmembrane segment spans residues 19-39 (SWFRGFILLLTFLIYACYHMS). N-linked (GlcNAc...) asparagine glycans are attached at residues N53, N62, and N68. Helical transmembrane passes span 88–108 (GAVD…SGIF), 118–140 (LSAG…FWNI), 142–164 (MLWY…WPSV), 179–199 (FIMG…SLIA), and 210–230 (SFIV…LFLI). Positions 240-252 (PPRHHDDPEKEQD) are enriched in basic and acidic residues. Residues 240–266 (PPRHHDDPEKEQDNPEDPVNSPYSSRE) are disordered. 6 helical membrane passes run 303-323 (CLLF…LYIF), 334-354 (GDLS…AGLI), 362-382 (ATTC…YNYI), 391-411 (IVML…ITTA), 434-454 (AIID…AGLI), and 462-482 (VFYM…RLVY).

Belongs to the major facilitator superfamily. Organophosphate:Pi antiporter (OPA) (TC 2.A.1.4) family. In terms of tissue distribution, highly expressed in bone marrow derived macrophages, and weakly in spleen.

The protein resides in the endoplasmic reticulum membrane. The enzyme catalyses D-glucose 6-phosphate(in) + phosphate(out) = D-glucose 6-phosphate(out) + phosphate(in). Its activity is regulated as follows. Inhibited by vanadate but not by chlorogenic acid. In terms of biological role, inorganic phosphate and glucose-6-phosphate antiporter. May transport cytoplasmic glucose-6-phosphate into the lumen of the endoplasmic reticulum and translocate inorganic phosphate into the opposite direction. Independent of a lumenal glucose-6-phosphatase. May not play a role in homeostatic regulation of blood glucose levels. The chain is Glucose-6-phosphate exchanger SLC37A2 from Mus musculus (Mouse).